Reading from the N-terminus, the 463-residue chain is D-inositol 3-phosphate glycosyltransferase (463 aa).

Residue histidine 40 participates in 1D-myo-inositol 3-phosphate binding. UDP-N-acetyl-alpha-D-glucosamine contacts are provided by residues 46–47 (QP) and glycine 54. 1D-myo-inositol 3-phosphate-binding positions include 51–56 (DAGGMN), lysine 109, tyrosine 142, threonine 166, and arginine 186. Residues arginine 260, lysine 265, and glutamine 318 each contribute to the UDP-N-acetyl-alpha-D-glucosamine site. Mg(2+) is bound by residues phenylalanine 327, histidine 328, and valine 330. UDP-N-acetyl-alpha-D-glucosamine-binding residues include glutamate 340 and glutamate 348. Mg(2+) is bound at residue threonine 354. Residues 443–463 (VRDPVAARKPRRWTARRGVGA) are disordered.

The protein belongs to the glycosyltransferase group 1 family. MshA subfamily. As to quaternary structure, homodimer.

It catalyses the reaction 1D-myo-inositol 3-phosphate + UDP-N-acetyl-alpha-D-glucosamine = 1D-myo-inositol 2-acetamido-2-deoxy-alpha-D-glucopyranoside 3-phosphate + UDP + H(+). Functionally, catalyzes the transfer of a N-acetyl-glucosamine moiety to 1D-myo-inositol 3-phosphate to produce 1D-myo-inositol 2-acetamido-2-deoxy-glucopyranoside 3-phosphate in the mycothiol biosynthesis pathway. The sequence is that of D-inositol 3-phosphate glycosyltransferase from Mycobacterium ulcerans (strain Agy99).